The following is a 414-amino-acid chain: Esterase FrsA (414 aa).

The protein belongs to the FrsA family.

It catalyses the reaction a carboxylic ester + H2O = an alcohol + a carboxylate + H(+). Catalyzes the hydrolysis of esters. The sequence is that of Esterase FrsA from Escherichia coli O139:H28 (strain E24377A / ETEC).